The following is a 699-amino-acid chain: Endogenous retrovirus group K member 113 Env polyprotein (699 aa).

The tract at residues 1 to 47 is disordered; the sequence is MNPSEMQRKAPPRRRRHRNRAPLTHKMNKMVTSEEQMKLPSTKKAEP. The N-terminal stretch at 1–89 is a signal peptide; that stretch reads MNPSEMQRKA…ALMIVSMVVS (89 aa). A compositionally biased stretch (basic residues) spans 10 to 20; sequence APPRRRRHRNR. Residues 90–632 are Extracellular-facing; it reads LPMPAGAAAA…NLNPVTWVKT (543 aa). N-linked (GlcNAc...) asparagine glycans are attached at residues Asn100, Asn128, Asn153, Asn274, Asn355, Asn372, and Asn461. The fusion peptide stretch occupies residues 466–486; that stretch reads FIFTLIAVIMGLIAVTATAAV. N-linked (GlcNAc...) asparagine glycans are attached at residues Asn507, Asn554, Asn566, and Asn585. The helical transmembrane segment at 633-653 threads the bilayer; the sequence is IGSTTIINLILILVCLFCLLL. The Cytoplasmic segment spans residues 654–699; the sequence is VCRCTQQLRRDSDHRERAMMTMAVLSKRKGGNVGKSKRDQIVTVSV.

It belongs to the beta type-B retroviral envelope protein family. HERV class-II K(HML-2) env subfamily. As to quaternary structure, the surface (SU) and transmembrane (TM) proteins form a heterodimer. SU and TM are attached by noncovalent interactions or by a labile interchain disulfide bond. In terms of processing, specific enzymatic cleavages in vivo yield the mature SU and TM proteins.

The protein resides in the cell membrane. It is found in the virion. Functionally, retroviral envelope proteins mediate receptor recognition and membrane fusion during early infection. Endogenous envelope proteins may have kept, lost or modified their original function during evolution. This endogenous envelope protein has lost its original fusogenic properties. In terms of biological role, SU mediates receptor recognition. TM anchors the envelope heterodimer to the viral membrane through one transmembrane domain. The other hydrophobic domain, called fusion peptide, mediates fusion of the viral membrane with the target cell membrane. The chain is Endogenous retrovirus group K member 113 Env polyprotein (HERVK_113) from Homo sapiens (Human).